The chain runs to 71 residues: MAATIKKGALVRVVTGNLENSLEALASDRRLPSYMFNSTAEVLDVKDDYALIKFYVPTPSVWLKLEQLEPV.

It belongs to the complex I NdhO subunit family. As to quaternary structure, NDH-1 can be composed of about 15 different subunits; different subcomplexes with different compositions have been identified which probably have different functions.

It localises to the cellular thylakoid membrane. The enzyme catalyses a plastoquinone + NADH + (n+1) H(+)(in) = a plastoquinol + NAD(+) + n H(+)(out). It catalyses the reaction a plastoquinone + NADPH + (n+1) H(+)(in) = a plastoquinol + NADP(+) + n H(+)(out). NDH-1 shuttles electrons from an unknown electron donor, via FMN and iron-sulfur (Fe-S) centers, to quinones in the respiratory and/or the photosynthetic chain. The immediate electron acceptor for the enzyme in this species is believed to be plastoquinone. Couples the redox reaction to proton translocation, and thus conserves the redox energy in a proton gradient. Cyanobacterial NDH-1 also plays a role in inorganic carbon-concentration. The chain is NAD(P)H-quinone oxidoreductase subunit O from Microcystis aeruginosa (strain NIES-843 / IAM M-2473).